The sequence spans 69 residues: Light-harvesting protein B-870 beta chain (69 aa).

Positions 1-2 (MA) are excised as a propeptide. At 3 to 22 (EVKQESLSGITEGEAKEFHK) the chain is on the cytoplasmic side. 2 residues coordinate a bacteriochlorophyll: H21 and H39. The helical transmembrane segment at 23–45 (IFTSSILVFFGVAAFAHLLVWIW) threads the bilayer. Residues 46 to 56 (RPWVPGPNGYS) are Periplasmic-facing. The propeptide occupies 57-69 (ALETLTQTLTYLS).

The protein belongs to the antenna complex beta subunit family. The core complex is formed by different alpha and beta chains, binding bacteriochlorophyll molecules, and arranged most probably in tetrameric structures disposed around the reaction center. The non-pigmented gamma chains may constitute additional components.

The protein localises to the cell inner membrane. Antenna complexes are light-harvesting systems, which transfer the excitation energy to the reaction centers. The polypeptide is Light-harvesting protein B-870 beta chain (Rhodospirillum rubrum (strain ATCC 11170 / ATH 1.1.1 / DSM 467 / LMG 4362 / NCIMB 8255 / S1)).